Consider the following 211-residue polypeptide: ATP phosphoribosyltransferase (211 aa).

This sequence belongs to the ATP phosphoribosyltransferase family. Short subfamily. Heteromultimer composed of HisG and HisZ subunits.

It is found in the cytoplasm. It catalyses the reaction 1-(5-phospho-beta-D-ribosyl)-ATP + diphosphate = 5-phospho-alpha-D-ribose 1-diphosphate + ATP. It participates in amino-acid biosynthesis; L-histidine biosynthesis; L-histidine from 5-phospho-alpha-D-ribose 1-diphosphate: step 1/9. Functionally, catalyzes the condensation of ATP and 5-phosphoribose 1-diphosphate to form N'-(5'-phosphoribosyl)-ATP (PR-ATP). Has a crucial role in the pathway because the rate of histidine biosynthesis seems to be controlled primarily by regulation of HisG enzymatic activity. The sequence is that of ATP phosphoribosyltransferase from Bacillus cereus (strain ATCC 14579 / DSM 31 / CCUG 7414 / JCM 2152 / NBRC 15305 / NCIMB 9373 / NCTC 2599 / NRRL B-3711).